We begin with the raw amino-acid sequence, 153 residues long: MGKISSLPTQLFKCCFCDFLKVKMHITSSSHLFYLALCLLSFTSSATAGPETLCGAELVDALQFVCGDRGFYFNKPTGYGSSSRRAPQTGIVDECCFRSCDLRRLEMYCAPLKPAKSARSVRAQRHTDMPKAQKEVHLKNTSRGSSGNKNYRM.

Residues 49–77 (GPETLCGAELVDALQFVCGDRGFYFNKPT) form a b region. Cystine bridges form between Cys-54–Cys-96, Cys-66–Cys-109, and Cys-95–Cys-100. The c stretch occupies residues 78–89 (GYGSSSRRAPQT). The tract at residues 90-110 (GIVDECCFRSCDLRRLEMYCA) is a. The interval 111 to 118 (PLKPAKSA) is d. Residues 119–153 (RSVRAQRHTDMPKAQKEVHLKNTSRGSSGNKNYRM) constitute a propeptide, e peptide. Residues 120–153 (SVRAQRHTDMPKAQKEVHLKNTSRGSSGNKNYRM) are disordered. The segment covering 125-138 (RHTDMPKAQKEVHL) has biased composition (basic and acidic residues). Over residues 139–153 (KNTSRGSSGNKNYRM) the composition is skewed to polar residues.

This sequence belongs to the insulin family. Forms a ternary complex with IGFR1 and ITGAV:ITGB3. Forms a ternary complex with IGFR1 and ITGA6:ITGB4. Forms a ternary complex with IGFBP3 and ALS.

Its subcellular location is the secreted. In terms of biological role, the insulin-like growth factors, isolated from plasma, are structurally and functionally related to insulin but have a much higher growth-promoting activity. May be a physiological regulator of [1-14C]-2-deoxy-D-glucose (2DG) transport and glycogen synthesis in osteoblasts. Stimulates glucose transport in bone-derived osteoblastic (PyMS) cells and is effective at much lower concentrations than insulin, not only regarding glycogen and DNA synthesis but also with regard to enhancing glucose uptake. May play a role in synapse maturation. Ca(2+)-dependent exocytosis of IGF1 is required for sensory perception of smell in the olfactory bulb. Acts as a ligand for IGF1R. Binds to the alpha subunit of IGF1R, leading to the activation of the intrinsic tyrosine kinase activity which autophosphorylates tyrosine residues in the beta subunit thus initiating a cascade of down-stream signaling events leading to activation of the PI3K-AKT/PKB and the Ras-MAPK pathways. Binds to integrins ITGAV:ITGB3 and ITGA6:ITGB4. Its binding to integrins and subsequent ternary complex formation with integrins and IGFR1 are essential for IGF1 signaling. Induces the phosphorylation and activation of IGFR1, MAPK3/ERK1, MAPK1/ERK2 and AKT1. As part of the MAPK/ERK signaling pathway, acts as a negative regulator of apoptosis in cardiomyocytes via promotion of STUB1/CHIP-mediated ubiquitination and degradation of ICER-type isoforms of CREM. The polypeptide is Insulin-like growth factor 1 (Sus scrofa (Pig)).